Consider the following 84-residue polypeptide: Putative membrane protein insertion efficiency factor (84 aa).

The interval 63–84 (LGGSGYDPPPPPKTPRKWKCEE) is disordered.

Belongs to the UPF0161 family.

It localises to the cell inner membrane. Its function is as follows. Could be involved in insertion of integral membrane proteins into the membrane. The protein is Putative membrane protein insertion efficiency factor of Caulobacter sp. (strain K31).